Reading from the N-terminus, the 417-residue chain is Putative transporter AmpG 1 (417 aa).

Transmembrane regions (helical) follow at residues 7-27 (LCII…TGNT), 42-62 (IGIL…APIF), 78-98 (LSWI…FSFL), 104-124 (LLLF…QDTI), 143-163 (GIYI…AIYL), 171-191 (EIYK…IVGI), 225-245 (ALKP…LVLY), 273-293 (VGKF…GVIM), 301-321 (SIFL…FLEI), 328-348 (LLFI…TAYI), 366-386 (FLSS…GYMV), and 389-409 (FGWQ…LLIL).

It belongs to the major facilitator superfamily.

It is found in the cell inner membrane. The protein is Putative transporter AmpG 1 (ampG1) of Rickettsia conorii (strain ATCC VR-613 / Malish 7).